Consider the following 119-residue polypeptide: UPF0292 protein TV1259 (119 aa).

Positions 11-93 constitute a Toprim domain; sequence SIPIIVEGRN…YVDLYLWNFI (83 aa). Mg(2+)-binding residues include Glu17, Asp62, and Asp64.

The protein belongs to the UPF0292 family. Requires Mg(2+) as cofactor.

The polypeptide is UPF0292 protein TV1259 (Thermoplasma volcanium (strain ATCC 51530 / DSM 4299 / JCM 9571 / NBRC 15438 / GSS1)).